Consider the following 136-residue polypeptide: Invertebrate-type lysozyme (136 aa).

The signal sequence occupies residues 1-11; that stretch reads METVSVEEGLD. The 117-residue stretch at 14-130 folds into the I-type lysozyme domain; it reads PGMVSQKCLL…WELLQKIPGC (117 aa). 7 cysteine pairs are disulfide-bonded: Cys-21-Cys-98, Cys-24-Cys-130, Cys-26-Cys-33, Cys-38-Cys-47, Cys-60-Cys-80, Cys-70-Cys-76, and Cys-94-Cys-112. Glu-29 serves as the catalytic Proton donor. Asp-41 serves as the catalytic Nucleophile. Residue 53-59 participates in substrate binding; it reads KQPYWID. Asn-75 carries N-linked (GlcNAc...) asparagine glycosylation. Residues Tyr-84, Tyr-92, 105–107, and Lys-119 each bind substrate; that span reads HNG.

Homodimer in its autoinhibited state. Active as monomer.

The protein resides in the secreted. It catalyses the reaction Hydrolysis of (1-&gt;4)-beta-linkages between N-acetylmuramic acid and N-acetyl-D-glucosamine residues in a peptidoglycan and between N-acetyl-D-glucosamine residues in chitodextrins.. Chitinase activity is activated by high salt concentrations which cause the release of the monomer from the autoinhibited homodimer. Functionally, bacteriolytic activity against Gram-positive bacterium M.luteus and thereby probably protects against bacterial infection. Also has chitinase activity. May act as an ispopeptidase, cleaving isopeptide bonds between the side chains of Lys and Gln residues in proteins or in the cross-linking peptide of peptidoglycan in bacterial cell walls. In Ruditapes philippinarum (Japanese carpet shell), this protein is Invertebrate-type lysozyme.